Here is a 43-residue protein sequence, read N- to C-terminus: Phi-Lf prophage-derived putative minor coat protein (43 aa).

This is Phi-Lf prophage-derived putative minor coat protein (gVII-1) from Xanthomonas campestris pv. campestris (strain ATCC 33913 / DSM 3586 / NCPPB 528 / LMG 568 / P 25).